A 515-amino-acid polypeptide reads, in one-letter code: Ent-isokaurene C2/C3-hydroxylase (515 aa).

Residues 5–25 (LILDLCLSALFVVVLSKLVSS) traverse the membrane as a helical segment. A heme-binding site is contributed by Cys452.

It belongs to the cytochrome P450 family. Heme is required as a cofactor.

The protein resides in the membrane. It carries out the reaction ent-isokaurene + 2 reduced [NADPH--hemoprotein reductase] + 2 O2 = ent-isokaurene-2beta,3beta-diol + 2 oxidized [NADPH--hemoprotein reductase] + 2 H2O + 2 H(+). Enzyme of the diterpenoid metabolism involved in the biosynthesis of antibacterial oryzalides such as phytocassane. The chain is Ent-isokaurene C2/C3-hydroxylase (CYP71Z6) from Oryza sativa subsp. japonica (Rice).